A 372-amino-acid polypeptide reads, in one-letter code: Glutamine synthetase (372 aa).

Residues 26–105 (IIAEYVWIDS…VLAECWNNDG (80 aa)) enclose the GS beta-grasp domain. A GS catalytic domain is found at 112 to 372 (HRHEAAKLFE…MTKEYERESL (261 aa)).

The protein belongs to the glutamine synthetase family. As to quaternary structure, homooctamer.

Its subcellular location is the cytoplasm. It carries out the reaction L-glutamate + NH4(+) + ATP = L-glutamine + ADP + phosphate + H(+). This is Glutamine synthetase (GLN1) from Kluyveromyces lactis (strain ATCC 8585 / CBS 2359 / DSM 70799 / NBRC 1267 / NRRL Y-1140 / WM37) (Yeast).